Reading from the N-terminus, the 137-residue chain is Small ribosomal subunit protein bS6 (137 aa).

The disordered stretch occupies residues 99–137; sequence LSPMKAAESREDRRSGGDDRPRRSADSEERQSASQDEEE. Residues 105 to 129 are compositionally biased toward basic and acidic residues; that stretch reads AESREDRRSGGDDRPRRSADSEERQ.

This sequence belongs to the bacterial ribosomal protein bS6 family.

Binds together with bS18 to 16S ribosomal RNA. In Marinobacter nauticus (strain ATCC 700491 / DSM 11845 / VT8) (Marinobacter aquaeolei), this protein is Small ribosomal subunit protein bS6.